Reading from the N-terminus, the 214-residue chain is tRNA (guanine-N(7)-)-methyltransferase (214 aa).

Residues glutamate 43, glutamate 68, aspartate 95, and aspartate 117 each contribute to the S-adenosyl-L-methionine site. The active site involves aspartate 117. Residues lysine 121, aspartate 153, and 190-193 each bind substrate; that span reads TEYE.

Belongs to the class I-like SAM-binding methyltransferase superfamily. TrmB family.

The enzyme catalyses guanosine(46) in tRNA + S-adenosyl-L-methionine = N(7)-methylguanosine(46) in tRNA + S-adenosyl-L-homocysteine. The protein operates within tRNA modification; N(7)-methylguanine-tRNA biosynthesis. Functionally, catalyzes the formation of N(7)-methylguanine at position 46 (m7G46) in tRNA. The polypeptide is tRNA (guanine-N(7)-)-methyltransferase (Staphylococcus aureus (strain USA300)).